The primary structure comprises 720 residues: Engulfment and cell motility protein 3 (720 aa).

In terms of domain architecture, ELMO spans 307 to 479 (EQRDQLQALR…VVREQLARTL (173 aa)). Residues 542 to 664 (RLCEGMLFRK…TDGLSALLGS (123 aa)) enclose the PH domain. The short motif at 696 to 706 (PEQPPPVPPPP) is the SH3-binding element.

Probably interacts directly with the SH3-domain of DOCK1 via its SH3-binding site. Part of a complex with DOCK1 and RAC1. Interacts with ADGRB3.

The protein resides in the cytoplasm. Its function is as follows. Involved in cytoskeletal rearrangements required for phagocytosis of apoptotic cells and cell motility. Acts in association with DOCK1 and CRK. Was initially proposed to be required in complex with DOCK1 to activate Rac Rho small GTPases. May enhance the guanine nucleotide exchange factor (GEF) activity of DOCK1. The protein is Engulfment and cell motility protein 3 (Elmo3) of Mus musculus (Mouse).